The chain runs to 144 residues: MSMMSEFKTFAMRGNVIDLAVGVIIGAAFGKIVDSVVNDLIMPVIGRIVGKLDFSNMFVTLAEPPPGTPMTLDALKKAGVPVFAYGNFLTIVVNFVILAFIIFLMVRAFNKMRAEEPAPAEPPPPPEDIVLLREIRDSLKTRQP.

Helical transmembrane passes span 16–36 (VIDLAVGVIIGAAFGKIVDSV) and 86–106 (GNFLTIVVNFVILAFIIFLMV).

The protein belongs to the MscL family. In terms of assembly, homopentamer.

Its subcellular location is the cell inner membrane. Its function is as follows. Channel that opens in response to stretch forces in the membrane lipid bilayer. May participate in the regulation of osmotic pressure changes within the cell. The chain is Large-conductance mechanosensitive channel from Cupriavidus pinatubonensis (strain JMP 134 / LMG 1197) (Cupriavidus necator (strain JMP 134)).